The chain runs to 415 residues: Squalene synthase 1 (415 aa).

2 consecutive transmembrane segments (helical) span residues 281–301 (AIFR…ALCF) and 391–411 (LIAI…SNLL).

Belongs to the phytoene/squalene synthase family. Requires Mg(2+) as cofactor. The cofactor is Mn(2+). Mostly expressed in the shoot apex (buds) and roots, and, to a lower extent, in stems, leaves, flowers and seeds.

The protein resides in the endoplasmic reticulum membrane. It carries out the reaction 2 (2E,6E)-farnesyl diphosphate + NADH + H(+) = squalene + 2 diphosphate + NAD(+). The enzyme catalyses 2 (2E,6E)-farnesyl diphosphate + NADPH + H(+) = squalene + 2 diphosphate + NADP(+). It participates in terpene metabolism; lanosterol biosynthesis; lanosterol from farnesyl diphosphate: step 1/3. Its function is as follows. Component of the triterpene saponins (e.g. ginsenosides or panaxosides) and phytosterols biosynthetic pathways. Catalyzes the biosynthesis of squalene. This chain is Squalene synthase 1, found in Panax ginseng (Korean ginseng).